We begin with the raw amino-acid sequence, 165 residues long: UPF0254 protein MMP0935 (165 aa).

The protein belongs to the UPF0254 family.

In Methanococcus maripaludis (strain DSM 14266 / JCM 13030 / NBRC 101832 / S2 / LL), this protein is UPF0254 protein MMP0935.